We begin with the raw amino-acid sequence, 655 residues long: RalA-binding protein 1 (655 aa).

The interval 1 to 158 (MTECFLPPTS…KKSKDLTAAD (158 aa)) is disordered. Position 2 is an N-acetylthreonine (T2). The span at 24-33 (LTRTPSSEEI) shows a compositional bias: polar residues. Phosphoserine is present on residues S29, S30, and S34. T44 is subject to Phosphothreonine. S48 and S62 each carry phosphoserine. The segment covering 52-68 (DILHEPPDVVSDDEKDH) has biased composition (basic and acidic residues). 69 to 74 (GKKKGK) contributes to the ATP binding site. Residues 69 to 79 (GKKKGKFKKKE) are compositionally biased toward basic residues. Residues S92 and S93 each carry the phosphoserine modification. Residues 102-118 (KMKRSKGIHVFKKPSFS) are compositionally biased toward basic residues. Positions 102–119 (KMKRSKGIHVFKKPSFSK) are nuclear localization signal. Over residues 119 to 155 (KKKEKDFKIKEKPKEEKHKEEKHKEEKHKEKKSKDLT) the composition is skewed to basic and acidic residues. Residues 154–219 (LTAADVVKQW…PAVFRECIDY (66 aa)) are mediates association with membranes and could form transmembrane domains. In terms of domain architecture, Rho-GAP spans 192–380 (IPLADAVERT…VVLKQVMKPL (189 aa)). The mediates interaction with RALA and RALB stretch occupies residues 403–499 (RRQEFLLNCL…LTEQEELLAM (97 aa)). 418-425 (GGIKDLSK) is a binding site for ATP. A phosphoserine mark is found at S461 and S463. Positions 500 to 655 (EQFLRRQIAS…PSRDRKETSI (156 aa)) are mediates interaction with REPS1 and REPS2. Disordered stretches follow at residues 525–551 (QSRQ…DEEE) and 601–655 (AEQQ…ETSI). Residues 536 to 551 (EEYSSESESESEDEEE) are compositionally biased toward acidic residues. A compositionally biased stretch (basic and acidic residues) spans 624–655 (GVLEPKAAKEQPKAGKEPAKPSPSRDRKETSI). Position 645 is a phosphoserine (S645).

As to quaternary structure, interacts with the GTP-bound form of RALA (via effector domain); during mitosis, recruits RALBP1 to the mitochondrion where it promotes DNM1L phosphorylation and mitochondrial fission. Interacts with DNM1L; mediates its mitotic kinase cyclin B-CDK1-mediated phosphorylation during mitosis to promote mitochondrial fission. Interacts with the mitotic kinase cyclin B-CDK1 during mitosis. Interacts with the GTP-bound form of RALB (via effector domain). Interacts with REPS1; the interaction is direct and does not affect RALA-binding nor GTPase activator activity of RALBP1. Interacts with REPS2; the interaction is direct and does not affect RALA-binding nor GTPase activator activity of RALBP1. Interacts with EPN1, NUMB and TFAP2A during interphase and mitosis. Interacts with AP2M1; as part of the AP2 complex. Interacts with CDC42. Interacts with RAC1. Post-translationally, tyrosine-phosphorylated upon stimulation of cells with EGF. In terms of processing, may undergo proteolytic cleavage to give peptides which reassemble to form a transporter complex. Expressed ubiquitously but at low levels. Shows a strong expression in the erythrocytes.

It localises to the cell membrane. It is found in the cytoplasm. The protein resides in the cytosol. Its subcellular location is the cytoskeleton. The protein localises to the spindle pole. It localises to the nucleus. It is found in the mitochondrion. The catalysed reaction is an S-substituted glutathione(in) + ATP + H2O = an S-substituted glutathione(out) + ADP + phosphate + H(+). It carries out the reaction ATP + H2O + xenobioticSide 1 = ADP + phosphate + xenobioticSide 2.. It catalyses the reaction leukotriene C4(in) + ATP + H2O = leukotriene C4(out) + ADP + phosphate + H(+). Multifunctional protein that functions as a downstream effector of RALA and RALB. As a GTPase-activating protein/GAP can inactivate CDC42 and RAC1 by stimulating their GTPase activity. As part of the Ral signaling pathway, may also regulate ligand-dependent EGF and insulin receptors-mediated endocytosis. During mitosis, may act as a scaffold protein in the phosphorylation of EPSIN/EPN1 by the mitotic kinase cyclin B-CDK1, preventing endocytosis during that phase of the cell cycle. During mitosis, also controls mitochondrial fission as an effector of RALA. Recruited to mitochondrion by RALA, acts as a scaffold to foster the mitotic kinase cyclin B-CDK1-mediated phosphorylation and activation of DNM1L. Functionally, could also function as a primary ATP-dependent active transporter for glutathione conjugates of electrophiles. May also actively catalyze the efflux of a wide range of substrates including xenobiotics like doxorubicin (DOX) contributing to cell multidrug resistance. In Homo sapiens (Human), this protein is RalA-binding protein 1.